A 152-amino-acid chain; its full sequence is UPF0225 protein YchJ (152 aa).

The protein belongs to the UPF0225 family.

In Escherichia coli O139:H28 (strain E24377A / ETEC), this protein is UPF0225 protein YchJ.